A 370-amino-acid polypeptide reads, in one-letter code: ADP-ribosylhydrolase ARH3 (370 aa).

Residue Glu-47 participates in Mg(2+) binding. Thr-70 carries the post-translational modification Phosphothreonine. Residues Thr-82, Asp-83, and Asp-84 each contribute to the Mg(2+) site. Asp-83 lines the substrate pocket. Substrate-binding positions include 152–158 (KGSYGNG), His-188, Leu-241, and Ile-277. The Mg(2+) site is built by Asp-320, Asp-322, and Thr-323.

The protein belongs to the ADP-ribosylglycohydrolase family. In terms of assembly, monomer. It depends on Mg(2+) as a cofactor. As to expression, ubiquitous.

Its subcellular location is the nucleus. The protein localises to the cytoplasm. The protein resides in the chromosome. It is found in the mitochondrion matrix. The catalysed reaction is [(1''-&gt;2')-ADP-alpha-D-ribose](n) + H2O = [(1''-&gt;2')-ADP-alpha-D-ribose](n-1) + ADP-D-ribose. It carries out the reaction 1''-O-acetyl-ADP-alpha-D-ribose + H2O = ADP-D-ribose + acetate + H(+). It catalyses the reaction O-(ADP-D-ribosyl)-L-seryl-[protein] + H2O = ADP-D-ribose + L-seryl-[protein]. The enzyme catalyses alpha-NAD(+) + H2O = ADP-D-ribose + nicotinamide + H(+). Its activity is regulated as follows. The protein undergoes a dramatic conformational switch from closed to open states upon substrate-binding, which enables specific substrate recognition for the 1''-O-linkage. The glutamate flap (Glu-47) blocks substrate entrance to Mg(2+) in the unliganded closed state. In presence of substrate, Glu-47 is ejected from the active site: this closed-to-open transition significantly widens the substrate-binding channel and precisely positions the scissile 1''-O-linkage for cleavage while securing tightly 2'- and 3'-hydroxyls of ADP-ribose. Its function is as follows. ADP-ribosylhydrolase that preferentially hydrolyzes the scissile alpha-O-linkage attached to the anomeric C1'' position of ADP-ribose and acts on different substrates, such as proteins ADP-ribosylated on serine and threonine, free poly(ADP-ribose) and O-acetyl-ADP-D-ribose. Specifically acts as a serine mono-ADP-ribosylhydrolase by mediating the removal of mono-ADP-ribose attached to serine residues on proteins, thereby playing a key role in DNA damage response. Serine ADP-ribosylation of proteins constitutes the primary form of ADP-ribosylation of proteins in response to DNA damage. Does not hydrolyze ADP-ribosyl-arginine, -cysteine, -diphthamide, or -asparagine bonds. Also able to degrade protein free poly(ADP-ribose), which is synthesized in response to DNA damage: free poly(ADP-ribose) acts as a potent cell death signal and its degradation by ADPRHL2 protects cells from poly(ADP-ribose)-dependent cell death, a process named parthanatos. Also hydrolyzes free poly(ADP-ribose) in mitochondria. Specifically digests O-acetyl-ADP-D-ribose, a product of deacetylation reactions catalyzed by sirtuins. Specifically degrades 1''-O-acetyl-ADP-D-ribose isomer, rather than 2''-O-acetyl-ADP-D-ribose or 3''-O-acetyl-ADP-D-ribose isomers. In Mus musculus (Mouse), this protein is ADP-ribosylhydrolase ARH3 (Adprs).